Reading from the N-terminus, the 350-residue chain is Small ribosomal subunit protein uS3 (350 aa).

A KH type-2 domain is found at 38–106 (IRKMMSRGME…QVQLNILEVK (69 aa)). Positions 211–350 (AEREAQEALQ…TPGTPEKAEE (140 aa)) are disordered. Residues 222 to 232 (QTRRDRPRRGP) show a composition bias toward basic residues. Residues 261-350 (NAPAAETAAS…TPGTPEKAEE (90 aa)) show a composition bias toward low complexity.

This sequence belongs to the universal ribosomal protein uS3 family. As to quaternary structure, part of the 30S ribosomal subunit. Forms a tight complex with proteins S10 and S14.

Its function is as follows. Binds the lower part of the 30S subunit head. Binds mRNA in the 70S ribosome, positioning it for translation. The chain is Small ribosomal subunit protein uS3 from Frankia alni (strain DSM 45986 / CECT 9034 / ACN14a).